We begin with the raw amino-acid sequence, 420 residues long: S-adenosylmethionine synthase (420 aa).

Histidine 16 contributes to the ATP binding site. Aspartate 18 provides a ligand contact to Mg(2+). Glutamate 44 serves as a coordination point for K(+). L-methionine-binding residues include glutamate 57 and glutamine 100. Positions 100 to 110 are flexible loop; that stretch reads QSADIAQGVDK. Residues 175–177, 251–252, aspartate 260, 266–267, alanine 283, and lysine 287 contribute to the ATP site; these read DGK, KF, and RK. Aspartate 260 contributes to the L-methionine binding site. Lysine 291 serves as a coordination point for L-methionine.

The protein belongs to the AdoMet synthase family. As to quaternary structure, homotetramer; dimer of dimers. The cofactor is Mg(2+). It depends on K(+) as a cofactor.

The protein resides in the cytoplasm. It catalyses the reaction L-methionine + ATP + H2O = S-adenosyl-L-methionine + phosphate + diphosphate. Its pathway is amino-acid biosynthesis; S-adenosyl-L-methionine biosynthesis; S-adenosyl-L-methionine from L-methionine: step 1/1. Its function is as follows. Catalyzes the formation of S-adenosylmethionine (AdoMet) from methionine and ATP. The overall synthetic reaction is composed of two sequential steps, AdoMet formation and the subsequent tripolyphosphate hydrolysis which occurs prior to release of AdoMet from the enzyme. The polypeptide is S-adenosylmethionine synthase (Trichodesmium erythraeum (strain IMS101)).